We begin with the raw amino-acid sequence, 233 residues long: MKLFDYAPLSLAWREFLQSEFKKPYFLEIEKRYLEALKSPKTIFPKSSNLFYALNLTPPSAVKIILLGQDPYHSTYLENQQELPVAMGLSFSVEKNAPIPPSLKNIFKELHANLGVSVPCCGDLSAWAKRGMLLLNAILSVEKNKAASHKRIGWEAFSDQILMRLFEANAPLIVVLLGKVAQKKIALIPKNKHIIITAPHPSPLSRGFLGSGVFTSIQNAYREVYHKDFDFSL.

Asp70 acts as the Proton acceptor in catalysis.

The protein belongs to the uracil-DNA glycosylase (UDG) superfamily. UNG family.

It is found in the cytoplasm. It carries out the reaction Hydrolyzes single-stranded DNA or mismatched double-stranded DNA and polynucleotides, releasing free uracil.. Excises uracil residues from the DNA which can arise as a result of misincorporation of dUMP residues by DNA polymerase or due to deamination of cytosine. The sequence is that of Uracil-DNA glycosylase from Helicobacter pylori (strain HPAG1).